The following is a 249-amino-acid chain: 5'-nucleotidase SurE (249 aa).

Residues Asp-8, Asp-9, Ser-39, and Asn-91 each coordinate a divalent metal cation.

The protein belongs to the SurE nucleotidase family. Requires a divalent metal cation as cofactor.

The protein resides in the cytoplasm. It carries out the reaction a ribonucleoside 5'-phosphate + H2O = a ribonucleoside + phosphate. Its function is as follows. Nucleotidase that shows phosphatase activity on nucleoside 5'-monophosphates. The chain is 5'-nucleotidase SurE from Pseudomonas paraeruginosa (strain DSM 24068 / PA7) (Pseudomonas aeruginosa (strain PA7)).